A 224-amino-acid chain; its full sequence is UPF0758 protein PSPPH_0210 (224 aa).

One can recognise an MPN domain in the interval 102–224 (ALENPTQVRN…PLSMVERGLM (123 aa)). The Zn(2+) site is built by His173, His175, and Asp186. Residues 173–186 (HNHPSGITTPSRSD) carry the JAMM motif motif.

It belongs to the UPF0758 family.

The chain is UPF0758 protein PSPPH_0210 from Pseudomonas savastanoi pv. phaseolicola (strain 1448A / Race 6) (Pseudomonas syringae pv. phaseolicola (strain 1448A / Race 6)).